We begin with the raw amino-acid sequence, 256 residues long: uncharacterized protein (256 aa).

Residues 1 to 24 (MIKRVNKLVLGISLLFLVISITAG) form the signal peptide. Cysteine 25 carries N-palmitoyl cysteine lipidation. Residue cysteine 25 is the site of S-diacylglycerol cysteine attachment.

Belongs to the staphylococcal tandem lipoprotein family.

Its subcellular location is the cell membrane. This is an uncharacterized protein from Staphylococcus aureus (strain MW2).